The following is a 167-amino-acid chain: Bacterial non-heme ferritin (167 aa).

One can recognise a Ferritin-like diiron domain in the interval 1-145 (MLSKDIIKLL…DILDKIELIG (145 aa)). Positions 17, 50, 53, 94, and 127 each coordinate Fe cation.

Belongs to the ferritin family. Prokaryotic subfamily. As to quaternary structure, homooligomer of 24 subunits that assemble into a spherical protein shell (12 +/- 1 nM diameter) that can sequester at least 2000 iron atoms.

Its subcellular location is the cytoplasm. It catalyses the reaction 4 Fe(2+) + O2 + 6 H2O = 4 iron(III) oxide-hydroxide + 12 H(+). Its function is as follows. Iron-storage protein. This Helicobacter pylori (strain J99 / ATCC 700824) (Campylobacter pylori J99) protein is Bacterial non-heme ferritin (ftnA).